We begin with the raw amino-acid sequence, 429 residues long: GTPase Obg (429 aa).

The Obg domain occupies 1 to 158 (MFVDQVKIYV…RNVQLELKVL (158 aa)). Residues 124-145 (RGNKRFATPANPAPELSENGEP) are disordered. Residues 159–329 (ADVGLVGFPS…LLLAIADKLE (171 aa)) form the OBG-type G domain. GTP-binding positions include 165–172 (GFPSVGKS), 190–194 (FTTIV), 212–215 (DLPG), 282–285 (NKMD), and 310–312 (SAV). Mg(2+)-binding residues include S172 and T192. The region spanning 351 to 429 (KYVAEEPDFE…LLDYEFEFMD (79 aa)) is the OCT domain.

This sequence belongs to the TRAFAC class OBG-HflX-like GTPase superfamily. OBG GTPase family. As to quaternary structure, monomer. It depends on Mg(2+) as a cofactor.

It is found in the cytoplasm. Functionally, an essential GTPase which binds GTP, GDP and possibly (p)ppGpp with moderate affinity, with high nucleotide exchange rates and a fairly low GTP hydrolysis rate. Plays a role in control of the cell cycle, stress response, ribosome biogenesis and in those bacteria that undergo differentiation, in morphogenesis control. This chain is GTPase Obg, found in Listeria innocua serovar 6a (strain ATCC BAA-680 / CLIP 11262).